The primary structure comprises 469 residues: Tetratricopeptide repeat protein 38 (469 aa).

Position 2 is an N-acetylalanine (A2). Position 5 is a phosphoserine (S5). TPR repeat units lie at residues R108–D141, S180–D213, and C252–A285.

This sequence belongs to the TTC38 family.

The polypeptide is Tetratricopeptide repeat protein 38 (TTC38) (Homo sapiens (Human)).